The sequence spans 479 residues: Sulfate adenylyltransferase subunit 1 (479 aa).

A tr-type G domain is found at 25–239 (KSLLRFLTCG…EVLETVDIQR (215 aa)). The segment at 34-41 (GSVDDGKS) is G1. Position 34-41 (34-41 (GSVDDGKS)) interacts with GTP. The tract at residues 92-96 (GITID) is G2. Residues 113-116 (DTPG) are G3. GTP contacts are provided by residues 113–117 (DTPGH) and 168–171 (NKMD). A G4 region spans residues 168–171 (NKMD). Residues 206–208 (SAL) form a G5 region.

It belongs to the TRAFAC class translation factor GTPase superfamily. Classic translation factor GTPase family. CysN/NodQ subfamily. Heterodimer composed of CysD, the smaller subunit, and CysN.

The enzyme catalyses sulfate + ATP + H(+) = adenosine 5'-phosphosulfate + diphosphate. It participates in sulfur metabolism; hydrogen sulfide biosynthesis; sulfite from sulfate: step 1/3. Its function is as follows. With CysD forms the ATP sulfurylase (ATPS) that catalyzes the adenylation of sulfate producing adenosine 5'-phosphosulfate (APS) and diphosphate, the first enzymatic step in sulfur assimilation pathway. APS synthesis involves the formation of a high-energy phosphoric-sulfuric acid anhydride bond driven by GTP hydrolysis by CysN coupled to ATP hydrolysis by CysD. In Salmonella paratyphi B (strain ATCC BAA-1250 / SPB7), this protein is Sulfate adenylyltransferase subunit 1.